We begin with the raw amino-acid sequence, 193 residues long: Bcl-2-like protein 2 (193 aa).

The residue at position 2 (alanine 2) is an N-acetylalanine. The short motif at 9–29 is the BH4 element; sequence DTRALVADFVGYKLRQKGYVC. A BH1 motif is present at residues 85-104; it reads ELFQGGPNWGRLVAFFVFGA. The BH2 signature appears at 136-151; it reads DWIHSSGGWAEFTALY.

It belongs to the Bcl-2 family. As to quaternary structure, interacts with HIF3A isoform 2 (via C-terminus domain). Interacts with BOP. As to expression, expressed in almost all myeloid cell lines and in a wide range of tissues, with highest levels in brain, colon, and salivary gland.

Its subcellular location is the mitochondrion membrane. Promotes cell survival. Blocks dexamethasone-induced apoptosis. Mediates survival of postmitotic Sertoli cells by suppressing death-promoting activity of BAX. This is Bcl-2-like protein 2 (Bcl2l2) from Mus musculus (Mouse).